We begin with the raw amino-acid sequence, 411 residues long: Acetylornithine aminotransferase (411 aa).

Pyridoxal 5'-phosphate-binding positions include Gly107–Thr108 and Phe141. Arg144 contacts N(2)-acetyl-L-ornithine. Asp227 to Gln230 is a binding site for pyridoxal 5'-phosphate. At Lys256 the chain carries N6-(pyridoxal phosphate)lysine. Residue Thr284 coordinates N(2)-acetyl-L-ornithine. A pyridoxal 5'-phosphate-binding site is contributed by Thr285.

The protein belongs to the class-III pyridoxal-phosphate-dependent aminotransferase family. ArgD subfamily. As to quaternary structure, homodimer. Requires pyridoxal 5'-phosphate as cofactor.

It is found in the cytoplasm. The enzyme catalyses N(2)-acetyl-L-ornithine + 2-oxoglutarate = N-acetyl-L-glutamate 5-semialdehyde + L-glutamate. It participates in amino-acid biosynthesis; L-arginine biosynthesis; N(2)-acetyl-L-ornithine from L-glutamate: step 4/4. The sequence is that of Acetylornithine aminotransferase from Xylella fastidiosa (strain 9a5c).